Reading from the N-terminus, the 251-residue chain is Gamma-glutamyl peptidase 5 (251 aa).

The Glutamine amidotransferase type-1 domain maps to 17–214 (STFVKKAYGG…IDRVVNLKLM (198 aa)). Residue cysteine 101 is the Nucleophile of the active site. Active-site residues include histidine 193 and glutamate 195.

It belongs to the peptidase C26 family.

The protein resides in the cytoplasm. Its subcellular location is the cytosol. It functions in the pathway secondary metabolite biosynthesis. Its function is as follows. Involved in glucosinolate biosynthesis. Hydrolyzes the gamma-glutamyl peptide bond of several glutathione (GSH) conjugates to produce Cys-Gly conjugates related to glucosinolates. The gamma-Glu-Cys-Gly-GSH conjugates are the sulfur-donating molecule in glucosinolate biosynthesis. This Arabidopsis thaliana (Mouse-ear cress) protein is Gamma-glutamyl peptidase 5.